A 140-amino-acid polypeptide reads, in one-letter code: Pro-vaccinia growth factor (140 aa).

Positions Met1–Phe18 are cleaved as a signal peptide. The Extracellular portion of the chain corresponds to Ala19 to Tyr100. An N-linked (GlcNAc...) asparagine; by host glycan is attached at Asn34. Residues Ala41–Gln81 form the EGF-like domain. 3 disulfides stabilise this stretch: Cys45/Cys58, Cys53/Cys69, and Cys71/Cys80. The N-linked (GlcNAc...) asparagine; by host glycan is linked to Asn95. Residues Ile101–Leu121 form a helical membrane-spanning segment. Over Ser122 to Pro140 the chain is Cytoplasmic.

This sequence belongs to the orthopoxvirus OPG019 family. Interacts with host EGFR.

The protein resides in the host membrane. Its subcellular location is the secreted. In terms of biological role, stimulates cellular proliferation (hyperplasia)and mobility around infected cells to promote rapid and efficient spread of infection. This effect is beneficial for virus replication in vivo, because poxviruses replicate possibly better in proliferating cells than in quiescent cells. Acts by binding host EGFR, inducing its dimerization, autophosphorylation and leading to activation of several cellular pathways regulating cell proliferation or cell survival. The activation by host EGFR of mitogen activated protein kinases (MAPK) and extracellular-signal regulated kinases (ERK) are essential for the positive effect of vaccinia growth factor on poxvirus virulence in vivo. The sequence is that of Pro-vaccinia growth factor (OPG019) from Homo sapiens (Human).